Consider the following 623-residue polypeptide: Chaperone protein HtpG (623 aa).

An a; substrate-binding region spans residues 1–336; the sequence is MVSKQQTMGF…ASDLPLNISR (336 aa). A b region spans residues 337–550; that stretch reads EILQDNKQVE…EQDMGLEMQR (214 aa). The segment at 551 to 623 is c; that stretch reads ILQAAGQQIP…NRVNRLLVSS (73 aa).

Belongs to the heat shock protein 90 family. As to quaternary structure, homodimer.

The protein resides in the cytoplasm. In terms of biological role, molecular chaperone. Has ATPase activity. This chain is Chaperone protein HtpG, found in Legionella pneumophila (strain Lens).